Reading from the N-terminus, the 361-residue chain is 3-dehydroquinate synthase (361 aa).

Residues 72-77 (SGEKEK), 130-131 (TT), Lys142, and Lys151 each bind NAD(+). 3 residues coordinate Zn(2+): Glu184, His247, and His264.

It belongs to the sugar phosphate cyclases superfamily. Dehydroquinate synthase family. Requires Co(2+) as cofactor. Zn(2+) is required as a cofactor. It depends on NAD(+) as a cofactor.

The protein resides in the cytoplasm. The enzyme catalyses 7-phospho-2-dehydro-3-deoxy-D-arabino-heptonate = 3-dehydroquinate + phosphate. Its pathway is metabolic intermediate biosynthesis; chorismate biosynthesis; chorismate from D-erythrose 4-phosphate and phosphoenolpyruvate: step 2/7. In terms of biological role, catalyzes the conversion of 3-deoxy-D-arabino-heptulosonate 7-phosphate (DAHP) to dehydroquinate (DHQ). This is 3-dehydroquinate synthase from Bacillus cereus (strain G9842).